An 811-amino-acid polypeptide reads, in one-letter code: Ribonucleoside-diphosphate reductase large subunit (811 aa).

Residues Thr-231, 246-247, Gly-277, 450-454, and 636-640 contribute to the substrate site; these read SC, NLCTE, and PTASS. A disulfide bond links Cys-247 and Cys-467. Asn-450 acts as the Proton acceptor in catalysis. Cys-452 (cysteine radical intermediate) is an active-site residue. The Proton acceptor role is filled by Glu-454.

This sequence belongs to the ribonucleoside diphosphate reductase large chain family. In terms of assembly, heterotetramer composed of a homodimer of the large subunit (R1) and a homodimer of the small subunit (R2). Larger multisubunit protein complex are also active, composed of (R1)n(R2)n.

It catalyses the reaction a 2'-deoxyribonucleoside 5'-diphosphate + [thioredoxin]-disulfide + H2O = a ribonucleoside 5'-diphosphate + [thioredoxin]-dithiol. In terms of biological role, ribonucleoside-diphosphate reductase holoenzyme provides the precursors necessary for viral DNA synthesis. Allows virus growth in non-dividing cells, as well as reactivation from latency in infected hosts. Catalyzes the biosynthesis of deoxyribonucleotides from the corresponding ribonucleotides. In Amazona oratrix (yellow-headed parrot), this protein is Ribonucleoside-diphosphate reductase large subunit.